We begin with the raw amino-acid sequence, 461 residues long: Transforming growth factor beta-1-induced transcript 1 protein (461 aa).

At M1 the chain carries N-acetylmethionine. The disordered stretch occupies residues 1-87 (MEDLDALLSD…PFSSSSGVLG (87 aa)). The tract at residues 1–200 (MEDLDALLSD…GCPSPPGQTS (200 aa)) is transcription activation. Residues 1–240 (MEDLDALLSD…CNKPIAGQVV (240 aa)) form an interaction with PTK2B/PYK2 region. An LD motif 1 motif is present at residues 3 to 15 (DLDALLSDLETTT). T33 bears the Phosphothreonine mark. Y38 bears the Phosphotyrosine mark. Residues 44–53 (TGSGESSGTT) are compositionally biased toward low complexity. Y60 carries the post-translational modification Phosphotyrosine. S68 carries the post-translational modification Phosphoserine. The segment at 83–136 (SGVLGNGLCELDRLLQELNATQFNITDEIMSQFPSSKMAEGEEKEDQSEDKSSP) is interaction with PTK2/FAK1. The LD motif 2 signature appears at 92 to 104 (ELDRLLQELNATQ). Positions 116–154 (PSSKMAEGEEKEDQSEDKSSPTVPPSPFPAPSKPSATSA) are disordered. A compositionally biased stretch (pro residues) spans 137-147 (TVPPSPFPAPS). A phosphoserine mark is found at S141, S164, and S186. An LD motif 3 motif is present at residues 157 to 168 (ELDRLMASLSDF). The segment at 171–204 (QNHLPASGPPQPPAASPTREGCPSPPGQTSKGSL) is disordered. Residue T188 is modified to Phosphothreonine. Position 194 is a phosphoserine (S194). The short motif at 203–215 (SLDTMLGLLQSDL) is the LD motif 4 element. 4 LIM zinc-binding domains span residues 226–285 (GLCG…RFSP), 286–343 (RCGF…QLFA), 344–403 (PRCQ…QRGS), and 404–461 (LCAT…KLFG). Residue S403 is modified to Phosphoserine. T407 bears the Phosphothreonine mark.

This sequence belongs to the paxillin family. Homooligomer. Interacts with PPARG. Interacts with TRAF4. Interacts with CRIP2. Interacts with HSPB1. Interacts with ILK. Interacts with LIMS1 and LIMS2. Interacts with NCK2. Interacts with NUDT16L1. Interacts with PAK. Interacts with PTPN12. Interacts with TCF3. Interacts with TCF7L2. Interacts with VCL. Interacts (via LD motif 3) with GIT1. Also interacts with GIT2. Forms a complex with ARHGEF7. Interacts with AR/androgen receptor in a ligand-dependent manner. Interacts with CSK. Interacts with PTK2/FAK1 and PTK2B/PYK2. Interacts with SLC6A3. Interacts with SLC6A4. Interacts with NR3C1. Interacts with SMAD3. Interacts with MAPK15. Interacts with SRC. Interacts with LYN. Interacts with talin. Interacts (via LIM zinc-binding domain 2) with CBLC (via RING-type zinc finger); the interaction is direct and enhances CBLC E3 ubiquitin-protein ligase activity. Interacts with PARVA. Interacts with PXN. Phosphorylated by gonadotropin-releasing hormone-activated SRC. Ubiquitously expressed. Higher expression is detected in lung and spleen. Expression decreases during pregnancy in mammary glands. Expressed in all brain areas, with higher levels in cerebellum, prefrontal cortex and hypothalamus. Expressed in smooth muscle, myoepithelial cells and platelets (at protein level). Preferentially expressed in mesenchymal versus epithelial cells (at protein level).

The protein localises to the cell junction. Its subcellular location is the focal adhesion. It is found in the nucleus matrix. The protein resides in the cytoplasm. It localises to the cytoskeleton. Functions as a molecular adapter coordinating multiple protein-protein interactions at the focal adhesion complex and in the nucleus. Links various intracellular signaling modules to plasma membrane receptors and regulates the Wnt and TGFB signaling pathways. May also regulate SLC6A3 and SLC6A4 targeting to the plasma membrane hence regulating their activity. In the nucleus, functions as a nuclear receptor coactivator regulating glucocorticoid, androgen, mineralocorticoid and progesterone receptor transcriptional activity. May play a role in the processes of cell growth, proliferation, migration, differentiation and senescence. May have a zinc-dependent DNA-binding activity. This is Transforming growth factor beta-1-induced transcript 1 protein (Tgfb1i1) from Mus musculus (Mouse).